A 156-amino-acid chain; its full sequence is Large ribosomal subunit protein uL15 (156 aa).

Positions 1–16 (MVRRFKRAVKYRRGSR) are enriched in basic residues. Positions 1–35 (MVRRFKRAVKYRRGSRTHGWGRVGQHRKSGGSGGK) are disordered.

The protein belongs to the universal ribosomal protein uL15 family. Part of the 50S ribosomal subunit.

Functionally, binds to the 23S rRNA. This chain is Large ribosomal subunit protein uL15, found in Pyrobaculum neutrophilum (strain DSM 2338 / JCM 9278 / NBRC 100436 / V24Sta) (Thermoproteus neutrophilus).